Reading from the N-terminus, the 234-residue chain is Gem-associated protein 8 (234 aa).

The disordered stretch occupies residues 60 to 116 (LAQSPAAKGGTSPKSRSKSPSASGDACRRRSRPGKPGPQRRSTEKPARFAEDNDSES). A compositionally biased stretch (low complexity) spans 67-83 (KGGTSPKSRSKSPSASG). Over residues 100–110 (RSTEKPARFAE) the composition is skewed to basic and acidic residues. Residues 130-153 (ITDELRQYFAETEQHREELRRQHQ) adopt a coiled-coil conformation.

In terms of assembly, part of the core SMN complex that contains SMN1, GEMIN2/SIP1, DDX20/GEMIN3, GEMIN4, GEMIN5, GEMIN6, GEMIN7, GEMIN8 and STRAP/UNRIP. Part of the SMN-Sm complex that contains SMN1, GEMIN2/SIP1, DDX20/GEMIN3, GEMIN4, GEMIN5, GEMIN6, GEMIN7, GEMIN8, STRAP/UNRIP and the Sm proteins SNRPB, SNRPD1, SNRPD2, SNRPD3, SNRPE, SNRPF and SNRPG. Interacts with GEMIN6; the interaction is direct. Interacts with GEMIN7; the interaction is direct. Interacts with SMN1; the interaction is direct. Interacts with GEMIN4; the interaction is direct.

Its subcellular location is the nucleus. The protein resides in the gem. The protein localises to the cytoplasm. Functionally, the SMN complex catalyzes the assembly of small nuclear ribonucleoproteins (snRNPs), the building blocks of the spliceosome, and thereby plays an important role in the splicing of cellular pre-mRNAs. Most spliceosomal snRNPs contain a common set of Sm proteins SNRPB, SNRPD1, SNRPD2, SNRPD3, SNRPE, SNRPF and SNRPG that assemble in a heptameric protein ring on the Sm site of the small nuclear RNA to form the core snRNP (Sm core). In the cytosol, the Sm proteins SNRPD1, SNRPD2, SNRPE, SNRPF and SNRPG are trapped in an inactive 6S pICln-Sm complex by the chaperone CLNS1A that controls the assembly of the core snRNP. To assemble core snRNPs, the SMN complex accepts the trapped 5Sm proteins from CLNS1A forming an intermediate. Binding of snRNA inside 5Sm triggers eviction of the SMN complex, thereby allowing binding of SNRPD3 and SNRPB to complete assembly of the core snRNP. This is Gem-associated protein 8 (GEMIN8) from Bos taurus (Bovine).